Reading from the N-terminus, the 369-residue chain is UDP-N-acetylglucosamine--N-acetylmuramyl-(pentapeptide) pyrophosphoryl-undecaprenol N-acetylglucosamine transferase (369 aa).

UDP-N-acetyl-alpha-D-glucosamine is bound by residues 10–12, asparagine 124, arginine 166, serine 196, isoleucine 251, and glutamine 296; that span reads TAG.

It belongs to the glycosyltransferase 28 family. MurG subfamily.

It is found in the cell membrane. The enzyme catalyses di-trans,octa-cis-undecaprenyl diphospho-N-acetyl-alpha-D-muramoyl-L-alanyl-D-glutamyl-meso-2,6-diaminopimeloyl-D-alanyl-D-alanine + UDP-N-acetyl-alpha-D-glucosamine = di-trans,octa-cis-undecaprenyl diphospho-[N-acetyl-alpha-D-glucosaminyl-(1-&gt;4)]-N-acetyl-alpha-D-muramoyl-L-alanyl-D-glutamyl-meso-2,6-diaminopimeloyl-D-alanyl-D-alanine + UDP + H(+). Its pathway is cell wall biogenesis; peptidoglycan biosynthesis. Functionally, cell wall formation. Catalyzes the transfer of a GlcNAc subunit on undecaprenyl-pyrophosphoryl-MurNAc-pentapeptide (lipid intermediate I) to form undecaprenyl-pyrophosphoryl-MurNAc-(pentapeptide)GlcNAc (lipid intermediate II). The chain is UDP-N-acetylglucosamine--N-acetylmuramyl-(pentapeptide) pyrophosphoryl-undecaprenol N-acetylglucosamine transferase from Acetivibrio thermocellus (strain ATCC 27405 / DSM 1237 / JCM 9322 / NBRC 103400 / NCIMB 10682 / NRRL B-4536 / VPI 7372) (Clostridium thermocellum).